A 103-amino-acid polypeptide reads, in one-letter code: Large ribosomal subunit protein bL21 (103 aa).

This sequence belongs to the bacterial ribosomal protein bL21 family. As to quaternary structure, part of the 50S ribosomal subunit. Contacts protein L20.

This protein binds to 23S rRNA in the presence of protein L20. This Chloroflexus aurantiacus (strain ATCC 29364 / DSM 637 / Y-400-fl) protein is Large ribosomal subunit protein bL21.